A 383-amino-acid chain; its full sequence is Succinyl-diaminopimelate desuccinylase (383 aa).

Position 70 (His-70) interacts with Zn(2+). Asp-72 is an active-site residue. Asp-103 contacts Zn(2+). Residue Glu-137 is the Proton acceptor of the active site. Residues Glu-138, Glu-166, and His-352 each coordinate Zn(2+).

It belongs to the peptidase M20A family. DapE subfamily. In terms of assembly, homodimer. Requires Zn(2+) as cofactor. Co(2+) serves as cofactor.

The enzyme catalyses N-succinyl-(2S,6S)-2,6-diaminopimelate + H2O = (2S,6S)-2,6-diaminopimelate + succinate. The protein operates within amino-acid biosynthesis; L-lysine biosynthesis via DAP pathway; LL-2,6-diaminopimelate from (S)-tetrahydrodipicolinate (succinylase route): step 3/3. Its function is as follows. Catalyzes the hydrolysis of N-succinyl-L,L-diaminopimelic acid (SDAP), forming succinate and LL-2,6-diaminopimelate (DAP), an intermediate involved in the bacterial biosynthesis of lysine and meso-diaminopimelic acid, an essential component of bacterial cell walls. The protein is Succinyl-diaminopimelate desuccinylase of Hahella chejuensis (strain KCTC 2396).